The sequence spans 202 residues: IMP cyclohydrolase (202 aa).

Belongs to the archaeal IMP cyclohydrolase family.

The enzyme catalyses IMP + H2O = 5-formamido-1-(5-phospho-D-ribosyl)imidazole-4-carboxamide. It participates in purine metabolism; IMP biosynthesis via de novo pathway; IMP from 5-formamido-1-(5-phospho-D-ribosyl)imidazole-4-carboxamide: step 1/1. In terms of biological role, catalyzes the cyclization of 5-formylamidoimidazole-4-carboxamide ribonucleotide to IMP. This Methanothermobacter thermautotrophicus (strain ATCC 29096 / DSM 1053 / JCM 10044 / NBRC 100330 / Delta H) (Methanobacterium thermoautotrophicum) protein is IMP cyclohydrolase.